We begin with the raw amino-acid sequence, 285 residues long: Probable endonuclease 4 (285 aa).

Zn(2+) contacts are provided by H69, H109, E145, D179, H182, H216, D229, H231, and E261.

It belongs to the AP endonuclease 2 family. It depends on Zn(2+) as a cofactor.

The catalysed reaction is Endonucleolytic cleavage to 5'-phosphooligonucleotide end-products.. Functionally, endonuclease IV plays a role in DNA repair. It cleaves phosphodiester bonds at apurinic or apyrimidinic (AP) sites, generating a 3'-hydroxyl group and a 5'-terminal sugar phosphate. In Shigella sonnei (strain Ss046), this protein is Probable endonuclease 4.